The sequence spans 129 residues: Capsid protein (129 aa).

Residues 31–104 (EWISSNSRSQ…FATNSDCELI (74 aa)) form a viral RNA-binding region.

Belongs to the Leviviricetes capsid protein family. In terms of assembly, homodimer. The capsid proteins form dimers that assemble by group of 5. Twelve such pentamers are linked together with free dimers. The homodimers binds to the viral RNA via an operator hairpin, but also to many other RNA sequences in the viral genome; this interaction probably shifts the virus from the replicative to the assembly phase and ensures specific encapsidation of the viral genome.

The protein localises to the virion. Functionally, capsid protein self-assembles to form an icosahedral capsid with a T=3 symmetry, about 26 nm in diameter, and consisting of 89 capsid proteins dimers (178 capsid proteins). Involved in viral genome encapsidation through the interaction between a capsid protein dimer and the multiple packaging signals present in the RNA genome. The capsid also contains 1 copy of the A2 maturation protein. In terms of biological role, acts as a translational repressor of viral replicase synthesis late in infection. This latter function is the result of capsid protein interaction with an RNA hairpin which contains the replicase ribosome-binding site. This chain is Capsid protein, found in Enterobacteria phage f2 (Bacteriophage f2).